We begin with the raw amino-acid sequence, 741 residues long: ABC transporter D family member 2 (741 aa).

The next 3 helical transmembrane spans lie at 39 to 59, 119 to 139, and 260 to 280; these read GSLG…FSLV, FLSL…SVSI, and VVVM…VSGF. Residues 131–409 form the ABC transmembrane type-1 domain; sequence ARTMLSVSIA…LMVALSQAIG (279 aa). The ABC transporter domain occupies 518–740; it reads IKFENVSIVS…DDDHLKKPLS (223 aa). ATP is bound at residue 551–558; sequence GPNGSGKS.

The protein belongs to the ABC transporter superfamily. ABCD family. Peroxisomal fatty acyl CoA transporter (TC 3.A.1.203) subfamily.

Its subcellular location is the membrane. This is ABC transporter D family member 2 (abcD2) from Dictyostelium discoideum (Social amoeba).